We begin with the raw amino-acid sequence, 130 residues long: Small ribosomal subunit protein uS8 (130 aa).

The protein belongs to the universal ribosomal protein uS8 family. In terms of assembly, part of the 30S ribosomal subunit.

Functionally, one of the primary rRNA binding proteins, it binds directly to 16S rRNA central domain where it helps coordinate assembly of the platform of the 30S subunit. This Korarchaeum cryptofilum (strain OPF8) protein is Small ribosomal subunit protein uS8.